A 710-amino-acid chain; its full sequence is Tubulin polyglutamylase TTLL11 (710 aa).

Positions 41–135 (VRVDAGAAGE…QRPVTVDSSK (95 aa)) are disordered. The span at 51-60 (PECKAGEEQP) shows a compositional bias: basic and acidic residues. Low complexity predominate over residues 64-82 (APAPAQPSAAEEGNTQVLQ). The span at 83-93 (RPPPTLPPSKP) shows a compositional bias: pro residues. A compositionally biased stretch (polar residues) spans 123–135 (NGSQRPVTVDSSK). In terms of domain architecture, TTL spans 128 to 480 (PVTVDSSKAR…EVKVAVIRDT (353 aa)). Residues lysine 249, 255–256 (QG), 282–285 (QEYI), and 295–297 (KFD) each bind ATP. Position 255 (glutamine 255) interacts with a protein. Arginine 321 contributes to the L-glutamate binding site. 343-344 (TN) lines the ATP pocket. The L-glutamate site is built by tyrosine 345, serine 346, and lysine 365. Mg(2+)-binding residues include aspartate 428, glutamate 441, and asparagine 443. Residues 467–538 (LVDEEVKVAV…SICLKQVFPK (72 aa)) form a c-MTBD region region. Residue lysine 473 coordinates L-glutamate. The tract at residues 665–710 (GVPSGGRPPHRGPPQEPSPSAQPAGDNPPPRTSCANKLSHPRHTLS) is disordered.

The protein belongs to the tubulin--tyrosine ligase family. It depends on Mg(2+) as a cofactor.

It localises to the cytoplasm. Its subcellular location is the cytoskeleton. The protein localises to the cilium basal body. It carries out the reaction L-glutamyl-[protein] + L-glutamate + ATP = gamma-L-glutamyl-L-glutamyl-[protein] + ADP + phosphate + H(+). The catalysed reaction is (L-glutamyl)(n)-gamma-L-glutamyl-L-glutamyl-[protein] + L-glutamate + ATP = (L-glutamyl)(n+1)-gamma-L-glutamyl-L-glutamyl-[protein] + ADP + phosphate + H(+). Polyglutamylase which modifies tubulin, generating polyglutamate side chains of variable lengths on the gamma-carboxyl group of specific glutamate residues within the C-terminal tail of tubulin. Preferentially mediates ATP-dependent polyglutamate long side-chain elongation over the initiation step of the polyglutamylation reaction. Preferentially modifies the alpha-tubulin tail over a beta-tail. Required for CCSAP localization to both spindle and cilia microtubules. Promotes tubulin polyglutamylation which stimulates spastin/SPAST-mediated microtubule severing, thereby regulating microtubule functions. This chain is Tubulin polyglutamylase TTLL11, found in Homo sapiens (Human).